We begin with the raw amino-acid sequence, 239 residues long: Small ribosomal subunit protein uS3 (239 aa).

The 69-residue stretch at Val39–Arg107 folds into the KH type-2 domain. Positions Gly214–Arg239 are disordered. Residues Glu216–Arg239 are compositionally biased toward basic and acidic residues.

It belongs to the universal ribosomal protein uS3 family. In terms of assembly, part of the 30S ribosomal subunit. Forms a tight complex with proteins S10 and S14.

Functionally, binds the lower part of the 30S subunit head. Binds mRNA in the 70S ribosome, positioning it for translation. This is Small ribosomal subunit protein uS3 from Xylella fastidiosa (strain M12).